The chain runs to 173 residues: Endoribonuclease YbeY (173 aa).

Residues histidine 126, histidine 130, and histidine 136 each contribute to the Zn(2+) site.

It belongs to the endoribonuclease YbeY family. Zn(2+) serves as cofactor.

The protein localises to the cytoplasm. Single strand-specific metallo-endoribonuclease involved in late-stage 70S ribosome quality control and in maturation of the 3' terminus of the 16S rRNA. The sequence is that of Endoribonuclease YbeY from Sinorhizobium fredii (strain NBRC 101917 / NGR234).